Reading from the N-terminus, the 345-residue chain is Esterase (345 aa).

The N-terminal stretch at 1–39 (MSSAMRKTTNSPVVRRLTAAAVALGSCLALAGPAGSAGA) is a signal peptide. Intrachain disulfides connect C73/C103, C156/C180, and C236/C294.

It is found in the secreted. This is Esterase (estA) from Streptomyces scabiei.